We begin with the raw amino-acid sequence, 504 residues long: MAMSLQGSRRASAGSRRRTSPPVSVRDAYGTASLSSSSNSGSCKGSDSSPTPRRSMKYTLCSDNHGIKPPTPEQYLTPLQQKEVCIRHLKARLKDTQDRLQDRDTEIDDLKTQLSRMQEDWIEEECHRVEAQLALKEARKEIRQLKQVIDTVKNNLIDKDKGLQKYFVDINIQNKKLETLLHSMEVAQNGVAKEEGTGESAGGSPARSLTRSSTYTKLSDPAVCGDRQAGDPSNTPAEDRADSGFVAADDTLSRTEALEASSLLSSGVDCGFEEASLHSSFNLGPRFPASNTYEKLLCGMEAAVQASCMQERAIQTDFVQYQPDLNTILEKVGQAQGCSSVLKDRHSELDLHPSGPRDPDSAVVVTVGDEPEAPEPITRGPAIHRPAVNSNPGLPVSVVCPVEEEEEAAAAAAAAAAATTTTTTTEKEPKSYWSRHYIVDLLAVVVPAVPTVAWLCRSQRRQGQPIYNISSLLRGCCTVALHSIRRISCSLSQPSAGSSGGSQL.

Residues M1 to Q74 form a disordered region. Low complexity-rich tracts occupy residues G7–R26 and S33–S49. Positions L79–K161 form a coiled coil. The tract at residues V191 to G244 is disordered. S200 and S204 each carry phosphoserine. Residues R207–K217 show a composition bias toward polar residues. At T214 the chain carries Phosphothreonine. Position 219 is a phosphoserine (S219). Phosphothreonine is present on T235. A helical transmembrane segment spans residues Y437–C456.

As to quaternary structure, binds to STX1A. Interacts with DNM1; this interaction inhibits the binding of DNM1 to AMPH and DNM1-receptor-mediated endocytosis.

It is found in the membrane. It localises to the synapse. Its subcellular location is the synaptosome. Functionally, inhibits SNARE complex formation by absorbing free STX1A. The polypeptide is Syntaphilin (Rattus norvegicus (Rat)).